A 92-amino-acid chain; its full sequence is Large ribosomal subunit protein eL34 (92 aa).

It belongs to the eukaryotic ribosomal protein eL34 family.

This Staphylothermus marinus (strain ATCC 43588 / DSM 3639 / JCM 9404 / F1) protein is Large ribosomal subunit protein eL34.